Reading from the N-terminus, the 272-residue chain is Shikimate dehydrogenase (NADP(+)) (272 aa).

Residues 14 to 16 (SKS) and Thr-61 each bind shikimate. Residue Lys-65 is the Proton acceptor of the active site. Residues Asn-86 and Asp-102 each contribute to the shikimate site. Residues 126–130 (GAGGA), 149–154 (NRTFSK), Ser-189, and Met-213 each bind NADP(+). Position 215 (Tyr-215) interacts with shikimate. Gly-238 is an NADP(+) binding site.

This sequence belongs to the shikimate dehydrogenase family. In terms of assembly, homodimer.

The catalysed reaction is shikimate + NADP(+) = 3-dehydroshikimate + NADPH + H(+). The protein operates within metabolic intermediate biosynthesis; chorismate biosynthesis; chorismate from D-erythrose 4-phosphate and phosphoenolpyruvate: step 4/7. Involved in the biosynthesis of the chorismate, which leads to the biosynthesis of aromatic amino acids. Catalyzes the reversible NADPH linked reduction of 3-dehydroshikimate (DHSA) to yield shikimate (SA). In Haemophilus influenzae (strain ATCC 51907 / DSM 11121 / KW20 / Rd), this protein is Shikimate dehydrogenase (NADP(+)).